A 523-amino-acid polypeptide reads, in one-letter code: 2-isopropylmalate synthase (523 aa).

Positions 5-267 (VIIFDTTLRD…HTNINHHEIW (263 aa)) constitute a Pyruvate carboxyltransferase domain. Mn(2+)-binding residues include Asp14, His202, His204, and Asn238. The regulatory domain stretch occupies residues 392–523 (RLDYFNVQSG…QNKENNKETV (132 aa)).

This sequence belongs to the alpha-IPM synthase/homocitrate synthase family. LeuA type 1 subfamily. In terms of assembly, homodimer. The cofactor is Mn(2+).

It is found in the cytoplasm. The catalysed reaction is 3-methyl-2-oxobutanoate + acetyl-CoA + H2O = (2S)-2-isopropylmalate + CoA + H(+). Its pathway is amino-acid biosynthesis; L-leucine biosynthesis; L-leucine from 3-methyl-2-oxobutanoate: step 1/4. Functionally, catalyzes the condensation of the acetyl group of acetyl-CoA with 3-methyl-2-oxobutanoate (2-ketoisovalerate) to form 3-carboxy-3-hydroxy-4-methylpentanoate (2-isopropylmalate). In Klebsiella pneumoniae subsp. pneumoniae (strain ATCC 700721 / MGH 78578), this protein is 2-isopropylmalate synthase.